We begin with the raw amino-acid sequence, 179 residues long: Large ribosomal subunit protein uL6 (179 aa).

This sequence belongs to the universal ribosomal protein uL6 family. Part of the 50S ribosomal subunit.

Functionally, this protein binds to the 23S rRNA, and is important in its secondary structure. It is located near the subunit interface in the base of the L7/L12 stalk, and near the tRNA binding site of the peptidyltransferase center. The chain is Large ribosomal subunit protein uL6 from Beutenbergia cavernae (strain ATCC BAA-8 / DSM 12333 / CCUG 43141 / JCM 11478 / NBRC 16432 / NCIMB 13614 / HKI 0122).